We begin with the raw amino-acid sequence, 652 residues long: Forkhead box protein O1 (652 aa).

Disordered regions lie at residues 1 to 62 (MAEA…ASAS) and 112 to 154 (VHPA…SSRR). Thr24 is subject to Phosphothreonine; by PKB/AKT1 or PKB/AKT2 and SGK1. Residues 35–62 (SNSTTSSPAPSGGAAANPDAAASLASAS) show a composition bias toward low complexity. Residues 114-133 (PAPPQPPPTGPLSQPPPVPP) are compositionally biased toward pro residues. The span at 134–146 (SAAAAAGPLAGQP) shows a compositional bias: low complexity. The segment at residues 156-232 (AWGNLSYADL…VQNEGTGKSS (77 aa)) is a DNA-binding region (fork-head). 2 DNA-binding regions span residues 208 to 215 (NSIRHNLS) and 231 to 234 (SSWW). Ser209 carries the phosphoserine; by STK4/MST1 modification. Residues Ser215, Ser231, and Ser232 each carry the phosphoserine modification. Disordered stretches follow at residues 231 to 342 (SSWW…DVHS) and 383 to 410 (SLTV…PNTS). Residues Lys242 and Lys245 each carry the N6-acetyllysine modification. Position 246 is a phosphoserine; by CDK1 (Ser246). Arg248 and Arg250 each carry omega-N-methylarginine; by PRMT1. The short motif at 248-250 (RRR) is the Nuclear localization signal element. Residue Ser253 is modified to Phosphoserine; by PKB/AKT1 and SGK1. Residues Lys259, Lys262, and Lys271 each carry the N6-acetyllysine modification. Positions 261-272 (AKSRGRAAKKKA) are enriched in basic residues. The segment at 280-562 (GPGDSPGSQF…TPVKTPLQVP (283 aa)) is sufficient for interaction with NLK. Residues Ser284 and Ser295 each carry the phosphoserine modification. Positions 306 to 323 (NWSTFRPRTSSNASTISG) are enriched in polar residues. The residue at position 316 (Ser316) is a Phosphoserine; by PKB/AKT1 or PKB/AKT2. A Phosphoserine; by CK1 and SGK1 modification is found at Ser319. At Ser322 the chain carries Phosphoserine; by CK1. Ser326 carries the post-translational modification Phosphoserine. The residue at position 330 (Thr330) is a Phosphothreonine. The interval 360–456 (SEISNPENME…GGLNQYNCAP (97 aa)) is required for interaction with RUNX2. Positions 392-401 (PGSMMQQTPC) are enriched in polar residues. Lys420 is modified (N6-acetyllysine). Positions 459–463 (LKELL) match the Required for interaction with SIRT1 motif.

Interacts with EP300 and CREBBP; the interactions acetylate FOXO1. Interacts with the 14-3-3 proteins, YWHAG and YWHAZ; the interactions require insulin-stimulated phosphorylation on Thr-24, promote nuclear exit and loss of transcriptional activity. Interacts with SKP2; the interaction ubiquitinates FOXO1 leading to its proteasomal degradation. Interacts with PMRT1; methylates FOXO1, prevents PKB/AKT1 phosphorylation and retains FOXO1 in the nucleus. Interacts (via an N-terminal domain) with FCOR; the interaction is direct, occurs in a forskolin-independent manner and prevents SIRT1 binding to FOXO1. Interacts (via the C-terminal half) with ATF4 (via its DNA-binding domain); the interaction occurs in osteoblasts, regulates glucose homeostasis via suppression of beta-cell proliferation and subsequent decrease in insulin production. Interacts with RUNX2; the interaction inhibits RUNX2 transcriptional activity and mediates the IGF1/insulin-dependent BGLAP expression in osteoblasts. Interacts with PPP2R1A; the interaction regulates the dephosphorylation of FOXO1 at Thr-24 and Ser-253 leading to its nuclear import. Binds to CDK1. Interacts with LRPPRC. Interacts with RUNX2; the interaction inhibits RUNX2 transcriptional activity and mediates the IGF1/insulin-dependent BGLAP expression in osteoblasts. Interacts with NLK. Interacts with SIRT1; the interaction results in the deacetylation of FOXO1 leading to activation of FOXO1-mediated transcription of genes involved in DNA repair and stress resistance. The interaction requires the presence of KRIT1 and is inhibited by FCOR. Interacts with SIRT2; the interaction is disrupted in response to oxidative stress or serum deprivation, leading to increased level of acetylated FOXO1, which promotes stress-induced autophagy by stimulating E1-like activating enzyme ATG7. Interacts (acetylated form) with ATG7; the interaction is increased in response to oxidative stress or serum deprivation and promotes the autophagic process leading to cell death. Interacts (acetylated form) with PPARG. Interacts with XBP1 isoform 2; this interaction is direct and leads to FOXO1 ubiquitination and degradation via the proteasome pathway. Interacts (via the Fork-head domain) with CEBPA; the interaction increases when FOXO1 is deacetylated. Interacts with WDFY2. Forms a complex with WDFY2 and AKT1. Interacts with CRY1. Interacts with PPIA/CYPA; the interaction promotes FOXO1 dephosphorylation, nuclear accumulation and transcriptional activity. Interacts with TOX4; FOXO1 is required for full induction of TOX4-dependent activity and the interaction is inhibited by insulin. Interacts (when phosphorylated on Ser-253) with STUB1/CHIP. Post-translationally, phosphorylation by NLK promotes nuclear export and inhibits the transcriptional activity. In response to growth factors, phosphorylation on Thr-24, Ser-253 and Ser-319 by PKB/AKT1 promotes nuclear export and inactivation of transactivational activity. Phosphorylation on Thr-24 is required for binding 14-3-3 proteins. Phosphorylation of Ser-253 decreases DNA-binding activity and promotes the phosphorylation of Thr-24 and Ser-316, permitting phosphorylation of Ser-319 and Ser-322, probably by CDK1, leading to nuclear exclusion and loss of function. Stress signals, such as response to oxygen or nitric oxide, attenuate the PKB/AKT1-mediated phosphorylation leading to nuclear retention. Phosphorylation of Ser-326 is independent of IGF1 and leads to reduced function. Dephosphorylated on Thr-24 and Ser-253 by PP2A in beta-cells under oxidative stress leading to nuclear retention. Phosphorylation of Ser-246 by CDK1 disrupts binding of 14-3-3 proteins leading to nuclear accumulation and has no effect on DNA-binding nor transcriptional activity. Phosphorylation by STK4/MST1 on Ser-209, upon oxidative stress, inhibits binding to 14-3-3 proteins and nuclear export. PPIA/CYPA promotes its dephosphorylation on Ser-253. Ubiquitinated by SKP2. Ubiquitinated, leading to proteasomal degradation. Ubiquitinated by STUB1/CHIP; when Ser-253 is phosphorylated. In terms of processing, methylation inhibits PKB/AKT1-mediated phosphorylation at Ser-253, promoting nuclear retention and increasing the transcriptional activity and cell death. Methylation increased by oxidative stress. Post-translationally, acetylation at Lys-259 and Lys-271 are necessary for autophagic cell death induction. Deacetylated by SIRT2 in response to oxidative stress or serum deprivation, thereby negatively regulating FOXO1-mediated autophagic cell death. Once in the nucleus, acetylated by CREBBP/EP300. Acetylation diminishes the interaction with target DNA and attenuates the transcriptional activity. It increases the phosphorylation at Ser-253, and is required for the transcriptional inhibition by FCOR. Deacetylation by SIRT1 results in reactivation of the transcriptional activity. Acetylation of FOXO1 diminishes its binding to PPARG in adipocytes. Deacetylated by SIRT2; deacetylation of FOXO1 directly increases its repressive binding to PPARG and inhibits adipocyte differentiation. Oxidative stress by hydrogen peroxide treatment appears to promote deacetylation and uncoupling of insulin-induced phosphorylation. By contrast, resveratrol acts independently of acetylation. Acetylated at Lys-420, promoting its localization to the nucleus and transcription factor activity. Deacetylation at Lys-420 by SIRT6, promotes its translocation into the cytoplasm, preventing its transcription factor activity. Deacetylation and subsequent inhibition by SIRT6 has different effects depending on cell types: it inhibits gluconeogenesis in hepatocytes, promotes glucose sensing in pancreatic beta-cells and regulates lipid catabolism in brown adipocytes. In terms of tissue distribution, expressed in liver, white and brown adipose tissues (at protein level).

The protein resides in the cytoplasm. Its subcellular location is the nucleus. In terms of biological role, transcription factor that is the main target of insulin signaling and regulates metabolic homeostasis in response to oxidative stress. Binds to the insulin response element (IRE) with consensus sequence 5'-TT[G/A]TTTTG-3' and the related Daf-16 family binding element (DBE) with consensus sequence 5'-TT[G/A]TTTAC-3'. Activity suppressed by insulin. Main regulator of redox balance and osteoblast numbers and controls bone mass. Orchestrates the endocrine function of the skeleton in regulating glucose metabolism. Also acts as a key regulator of chondrogenic commitment of skeletal progenitor cells in response to lipid availability: when lipids levels are low, translocates to the nucleus and promotes expression of SOX9, which induces chondrogenic commitment and suppresses fatty acid oxidation. Acts synergistically with ATF4 to suppress osteocalcin/BGLAP activity, increasing glucose levels and triggering glucose intolerance and insulin insensitivity. Also suppresses the transcriptional activity of RUNX2, an upstream activator of osteocalcin/BGLAP. Acts as an inhibitor of glucose sensing in pancreatic beta cells by acting as a transcription repressor and suppressing expression of PDX1. In hepatocytes, promotes gluconeogenesis by acting together with PPARGC1A and CEBPA to activate the expression of genes such as IGFBP1, G6PC1 and PCK1. Also promotes gluconeogenesis by directly promoting expression of PPARGC1A and G6PC1. Important regulator of cell death acting downstream of CDK1, PKB/AKT1 and STK4/MST1. Promotes neural cell death. Mediates insulin action on adipose tissue. Regulates the expression of adipogenic genes such as PPARG during preadipocyte differentiation and, adipocyte size and adipose tissue-specific gene expression in response to excessive calorie intake. Regulates the transcriptional activity of GADD45A and repair of nitric oxide-damaged DNA in beta-cells. Required for the autophagic cell death induction in response to starvation or oxidative stress in a transcription-independent manner. Mediates the function of MLIP in cardiomyocytes hypertrophy and cardiac remodeling. Positive regulator of apoptosis in cardiac smooth muscle cells as a result of its transcriptional activation of pro-apoptotic genes. Regulates endothelial cell (EC) viability and apoptosis in a PPIA/CYPA-dependent manner via transcription of CCL2 and BCL2L11 which are involved in EC chemotaxis and apoptosis. The chain is Forkhead box protein O1 (Foxo1) from Mus musculus (Mouse).